Consider the following 212-residue polypeptide: Ribosomal RNA small subunit methyltransferase G (212 aa).

S-adenosyl-L-methionine is bound by residues Gly80, Leu85, Ala131–Glu132, and Arg146.

It belongs to the methyltransferase superfamily. RNA methyltransferase RsmG family.

It localises to the cytoplasm. The enzyme catalyses guanosine(527) in 16S rRNA + S-adenosyl-L-methionine = N(7)-methylguanosine(527) in 16S rRNA + S-adenosyl-L-homocysteine. In terms of biological role, specifically methylates the N7 position of guanine in position 527 of 16S rRNA. This is Ribosomal RNA small subunit methyltransferase G from Xanthomonas oryzae pv. oryzae (strain KACC10331 / KXO85).